Consider the following 376-residue polypeptide: Putative peptide import ATP-binding protein BMEII0205 (376 aa).

The segment at M1–G25 is disordered. The 251-residue stretch at V64–L314 folds into the ABC transporter domain. G106–S113 serves as a coordination point for ATP.

This sequence belongs to the ABC transporter superfamily. The complex is composed of two ATP-binding proteins (BMEII0205 and BMEII0206), two transmembrane proteins (BMEII0207/BMEII0208 and BMEII0209) and a solute-binding protein (BMEII0210).

The protein resides in the cell inner membrane. Probably part of an ABC transporter complex that could be involved in peptide import. Probably responsible for energy coupling to the transport system. This chain is Putative peptide import ATP-binding protein BMEII0205, found in Brucella melitensis biotype 1 (strain ATCC 23456 / CCUG 17765 / NCTC 10094 / 16M).